The primary structure comprises 247 residues: 2,3-bisphosphoglycerate-dependent phosphoglycerate mutase (247 aa).

Residues 8–15, 21–22, R60, 87–90, K98, 114–115, and 183–184 contribute to the substrate site; these read RHGESQWN, TG, ERHY, RR, and GN. H9 (tele-phosphohistidine intermediate) is an active-site residue. E87 acts as the Proton donor/acceptor in catalysis.

The protein belongs to the phosphoglycerate mutase family. BPG-dependent PGAM subfamily.

The enzyme catalyses (2R)-2-phosphoglycerate = (2R)-3-phosphoglycerate. It participates in carbohydrate degradation; glycolysis; pyruvate from D-glyceraldehyde 3-phosphate: step 3/5. In terms of biological role, catalyzes the interconversion of 2-phosphoglycerate and 3-phosphoglycerate. This Chlorobium phaeobacteroides (strain BS1) protein is 2,3-bisphosphoglycerate-dependent phosphoglycerate mutase.